We begin with the raw amino-acid sequence, 156 residues long: Small ribosomal subunit protein uS7 (156 aa).

The protein belongs to the universal ribosomal protein uS7 family. Part of the 30S ribosomal subunit. Contacts proteins S9 and S11.

Its function is as follows. One of the primary rRNA binding proteins, it binds directly to 16S rRNA where it nucleates assembly of the head domain of the 30S subunit. Is located at the subunit interface close to the decoding center, probably blocks exit of the E-site tRNA. This chain is Small ribosomal subunit protein uS7, found in Streptococcus pyogenes serotype M12 (strain MGAS2096).